Consider the following 42-residue polypeptide: Lebocin-like anionic peptide 1 (42 aa).

As to expression, hemolymph.

The protein localises to the secreted. Functionally, antimicrobial protein. Has antibacterial activity against the Gram-positive bacteria M.luteus (MIC=22.7 uM) and L.monocytogenes (MIC=90.9 uM). Lacks antibacterial activity against the Gram-positive bacteria B.circulans, S.aureus, and S.lutea, and the Gram-negative bacteria E.coli D31, E.coli ATCC 25922, and S.typhimurium. Has antifungal activity against A.niger (MIC=90.9 uM) and T.harzianum (MIC=90.9 uM), but lacks antifungal activity against S.cerevisiae, P.pastoris, Z.marxianus, C.albicans, C.fructus, and F.oxysporum. In Galleria mellonella (Greater wax moth), this protein is Lebocin-like anionic peptide 1.